Consider the following 501-residue polypeptide: Cytochrome P450 90A3 (501 aa).

Residues 2-22 form a helical membrane-spanning segment; the sequence is AAAALLLLAAAAAIVVVAMVL. Residue C446 participates in heme binding.

This sequence belongs to the cytochrome P450 family. Heme is required as a cofactor. In terms of tissue distribution, highly expressed in shoot apex and inflorenscence. Expressed in roots, stems, leaf blades and leaf sheaths.

The protein resides in the membrane. Its pathway is plant hormone biosynthesis; brassinosteroid biosynthesis. Catalyzes the C23-alpha-hydroxylation step in brassinosteroid biosynthesis. Converts 6-deoxocathasterone (6-deoxoCT) to 6-deoxoteasterone (6-deoxoTE) in the late C6-oxidation pathway and cathasterone (CT) to teasterone (TE) in the early C6-oxidation pathway of brassinolide (BL) biosynthesis. The chain is Cytochrome P450 90A3 from Oryza sativa subsp. japonica (Rice).